Reading from the N-terminus, the 206-residue chain is Phosphoserine phosphatase (206 aa).

Asp7 serves as the catalytic Nucleophile. 2 residues coordinate Mg(2+): Asp7 and Asp9. Asp9 (proton donor) is an active-site residue. Substrate-binding positions include Glu16, Arg52, 95 to 96 (SG), and Lys140. Asp163 serves as a coordination point for Mg(2+). Asn166 contributes to the substrate binding site.

Belongs to the HAD-like hydrolase superfamily. SerB family. Requires Mg(2+) as cofactor.

It catalyses the reaction O-phospho-L-serine + H2O = L-serine + phosphate. The enzyme catalyses O-phospho-D-serine + H2O = D-serine + phosphate. The protein operates within amino-acid biosynthesis; L-serine biosynthesis; L-serine from 3-phospho-D-glycerate: step 3/3. This Wolinella succinogenes (strain ATCC 29543 / DSM 1740 / CCUG 13145 / JCM 31913 / LMG 7466 / NCTC 11488 / FDC 602W) (Vibrio succinogenes) protein is Phosphoserine phosphatase.